The following is a 389-amino-acid chain: Serpentine receptor class alpha/beta-14 (389 aa).

Topologically, residues 1–45 are extracellular; that stretch reads MPSDDFVKTARKALISHSVSIQNYTEDDCQIAFHATTNSFMQTIR. Residue Asn-23 is glycosylated (N-linked (GlcNAc...) asparagine). A helical membrane pass occupies residues 46–66; the sequence is LVHIFFCTFGAISSSLFIYVL. At 67–81 the chain is on the cytoplasmic side; the sequence is LNSSSRNLHRNLRIS. Residues 82–102 form a helical membrane-spanning segment; the sequence is LASLAFAALIACLQLDFIAFY. At 103–123 the chain is on the extracellular side; that stretch reads HLALTLTADNACDSMYEARKC. Residues Cys-123 and Cys-198 are joined by a disulfide bond. The helical transmembrane segment at 124–144 threads the bilayer; that stretch reads AILRFPVVLSIYATLCGIIVL. Topologically, residues 145–167 are cytoplasmic; it reads AIERTIATLKYKTYEANGSRVVG. Residues 168–188 form a helical membrane-spanning segment; the sequence is LVLVTGQWFVCIIVAVFSVLL. The Extracellular portion of the chain corresponds to 189-208; sequence RSDPGYVHYCTAYVSHPRTS. The chain crosses the membrane as a helical span at residues 209–229; the sequence is VFSLCFMSALEVATLVYFVLL. The Cytoplasmic portion of the chain corresponds to 230 to 268; it reads LQSNQRRQVNEFVNKAMHSLSERYQLQENVRIMKILIPS. The chain crosses the membrane as a helical span at residues 269 to 289; the sequence is ITVHAILGFIGLGSMLAFAII. The Extracellular portion of the chain corresponds to 290–303; the sequence is YRYADERLIVGFAP. The chain crosses the membrane as a helical span at residues 304 to 324; sequence FSEVVLLVIPIYAVVFPIVAV. The Cytoplasmic portion of the chain corresponds to 325–389; sequence VQNKQLRLAS…FDLLNEMWKK (65 aa).

It belongs to the nematode receptor-like protein srab family.

It is found in the membrane. This Caenorhabditis elegans protein is Serpentine receptor class alpha/beta-14.